The primary structure comprises 40 residues: Photosystem I reaction center subunit IX (40 aa).

A helical transmembrane segment spans residues 12–34 (APVLLTAWMSLTAGMIIEIQRFF).

It belongs to the PsaJ family.

The protein localises to the plastid. It is found in the chloroplast thylakoid membrane. Its function is as follows. May help in the organization of the PsaE and PsaF subunits. The protein is Photosystem I reaction center subunit IX of Emiliania huxleyi (Coccolithophore).